The following is a 364-amino-acid chain: Mitogen-activated protein kinase 11 (364 aa).

Residues Leu24 to Phe308 form the Protein kinase domain. ATP-binding positions include Val30–Val38 and Lys53. Glu71 contributes to the nilotinib binding site. Asp168 serves as the catalytic Proton acceptor. At Thr180 the chain carries Phosphothreonine; by MAP2K3, MAP2K4 and MAP2K6. Residues Thr180 to Tyr182 carry the TXY motif. At Tyr182 the chain carries Phosphotyrosine; by MAP2K3, MAP2K4 and MAP2K6. The interval His312 to Glu331 is disordered. The span at Pro314 to Ser326 shows a compositional bias: acidic residues. Tyr323 carries the post-translational modification Phosphotyrosine; by ZAP70.

The protein belongs to the protein kinase superfamily. CMGC Ser/Thr protein kinase family. MAP kinase subfamily. In terms of assembly, interacts with HDAC3 and DUSP16. The cofactor is Mg(2+). Post-translationally, dually phosphorylated on Thr-180 and Tyr-182 by MAP2K3/MKK3, MAP2K4/MKK4 and MAP2K6/MKK6, which activates the enzyme.

The protein resides in the cytoplasm. The protein localises to the nucleus. It catalyses the reaction L-seryl-[protein] + ATP = O-phospho-L-seryl-[protein] + ADP + H(+). It carries out the reaction L-threonyl-[protein] + ATP = O-phospho-L-threonyl-[protein] + ADP + H(+). Its activity is regulated as follows. Activated by phosphorylation on threonine and tyrosine by MAP2K3/MKK3, MAP2K4/MKK4 and MAP2K6/MKK6. MAP2K3/MKK3 and MAP2K6/MKK6 are both essential for the activation of MAPK11 induced by environmental stress. HDAC3 interacts directly and selectively with MAPK11 to repress ATF2 transcriptional activity, and regulate TNF gene expression in LPS-stimulated cells. Inhibited by SB203580 and pyridinyl-imidazole related compounds. In terms of biological role, serine/threonine kinase which acts as an essential component of the MAP kinase signal transduction pathway. MAPK11 is one of the four p38 MAPKs which play an important role in the cascades of cellular responses evoked by extracellular stimuli such as pro-inflammatory cytokines or physical stress leading to direct activation of transcription factors. Accordingly, p38 MAPKs phosphorylate a broad range of proteins and it has been estimated that they may have approximately 200 to 300 substrates each. MAPK11 functions are mostly redundant with those of MAPK14. Some of the targets are downstream kinases which are activated through phosphorylation and further phosphorylate additional targets. RPS6KA5/MSK1 and RPS6KA4/MSK2 can directly phosphorylate and activate transcription factors such as CREB1, ATF1, the NF-kappa-B isoform RELA/NFKB3, STAT1 and STAT3, but can also phosphorylate histone H3 and the nucleosomal protein HMGN1. RPS6KA5/MSK1 and RPS6KA4/MSK2 play important roles in the rapid induction of immediate-early genes in response to stress or mitogenic stimuli, either by inducing chromatin remodeling or by recruiting the transcription machinery. On the other hand, two other kinase targets, MAPKAPK2/MK2 and MAPKAPK3/MK3, participate in the control of gene expression mostly at the post-transcriptional level, by phosphorylating ZFP36 (tristetraprolin) and ELAVL1, and by regulating EEF2K, which is important for the elongation of mRNA during translation. MKNK1/MNK1 and MKNK2/MNK2, two other kinases activated by p38 MAPKs, regulate protein synthesis by phosphorylating the initiation factor EIF4E2. In the cytoplasm, the p38 MAPK pathway is an important regulator of protein turnover. For example, CFLAR is an inhibitor of TNF-induced apoptosis whose proteasome-mediated degradation is regulated by p38 MAPK phosphorylation. Ectodomain shedding of transmembrane proteins is regulated by p38 MAPKs as well. In response to inflammatory stimuli, p38 MAPKs phosphorylate the membrane-associated metalloprotease ADAM17. Such phosphorylation is required for ADAM17-mediated ectodomain shedding of TGF-alpha family ligands, which results in the activation of EGFR signaling and cell proliferation. Additional examples of p38 MAPK substrates are the FGFR1. FGFR1 can be translocated from the extracellular space into the cytosol and nucleus of target cells, and regulates processes such as rRNA synthesis and cell growth. FGFR1 translocation requires p38 MAPK activation. In the nucleus, many transcription factors are phosphorylated and activated by p38 MAPKs in response to different stimuli. Classical examples include ATF1, ATF2, ATF6, ELK1, PTPRH, DDIT3, TP53/p53 and MEF2C and MEF2A. The p38 MAPKs are emerging as important modulators of gene expression by regulating chromatin modifiers and remodelers. The promoters of several genes involved in the inflammatory response, such as IL6, IL8 and IL12B, display a p38 MAPK-dependent enrichment of histone H3 phosphorylation on 'Ser-10' (H3S10ph) in LPS-stimulated myeloid cells. This phosphorylation enhances the accessibility of the cryptic NF-kappa-B-binding sites marking promoters for increased NF-kappa-B recruitment. Phosphorylates methyltransferase DOT1L on 'Ser-834', 'Thr-900', 'Ser-902', 'Thr-984', 'Ser-1001', 'Ser-1009' and 'Ser-1104'. The protein is Mitogen-activated protein kinase 11 (Mapk11) of Mus musculus (Mouse).